Here is a 116-residue protein sequence, read N- to C-terminus: NADH-ubiquinone oxidoreductase chain 3 (116 aa).

A run of 3 helical transmembrane segments spans residues 4–24, 56–76, and 88–108; these read LIIT…IAFW, FFLI…LLPL, and TLIL…YEWI.

It belongs to the complex I subunit 3 family. Core subunit of respiratory chain NADH dehydrogenase (Complex I) which is composed of 45 different subunits. Interacts with TMEM186. Interacts with TMEM242.

The protein localises to the mitochondrion inner membrane. It carries out the reaction a ubiquinone + NADH + 5 H(+)(in) = a ubiquinol + NAD(+) + 4 H(+)(out). In terms of biological role, core subunit of the mitochondrial membrane respiratory chain NADH dehydrogenase (Complex I) which catalyzes electron transfer from NADH through the respiratory chain, using ubiquinone as an electron acceptor. Essential for the catalytic activity of complex I. The chain is NADH-ubiquinone oxidoreductase chain 3 from Osphranter robustus (Wallaroo).